A 353-amino-acid chain; its full sequence is Photosystem II protein D1 (353 aa).

Threonine 2 carries the N-acetylthreonine modification. Threonine 2 carries the post-translational modification Phosphothreonine. 3 helical membrane passes run 29–46, 118–133, and 142–156; these read YIGW…TATS, HFLL…EWEL, and WIAV…AATA. Residue histidine 118 participates in chlorophyll a binding. Tyrosine 126 is a binding site for pheophytin a. [CaMn4O5] cluster-binding residues include aspartate 170 and glutamate 189. A helical membrane pass occupies residues 197–218; the sequence is FHMLGVAGVFGGSLFSAMHGSL. Histidine 198 is a chlorophyll a binding site. A quinone is bound by residues histidine 215 and 264–265; that span reads SF. Histidine 215 is a Fe cation binding site. Histidine 272 contributes to the Fe cation binding site. Residues 274–288 traverse the membrane as a helical segment; sequence FLAAWPVIGIWFTAL. 4 residues coordinate [CaMn4O5] cluster: histidine 332, glutamate 333, aspartate 342, and alanine 344. Positions 345-353 are excised as a propeptide; sequence AVEAPSTNG.

This sequence belongs to the reaction center PufL/M/PsbA/D family. As to quaternary structure, PSII is composed of 1 copy each of membrane proteins PsbA, PsbB, PsbC, PsbD, PsbE, PsbF, PsbH, PsbI, PsbJ, PsbK, PsbL, PsbM, PsbT, PsbX, PsbY, PsbZ, Psb30/Ycf12, at least 3 peripheral proteins of the oxygen-evolving complex and a large number of cofactors. It forms dimeric complexes. Requires The D1/D2 heterodimer binds P680, chlorophylls that are the primary electron donor of PSII, and subsequent electron acceptors. It shares a non-heme iron and each subunit binds pheophytin, quinone, additional chlorophylls, carotenoids and lipids. D1 provides most of the ligands for the Mn4-Ca-O5 cluster of the oxygen-evolving complex (OEC). There is also a Cl(-1) ion associated with D1 and D2, which is required for oxygen evolution. The PSII complex binds additional chlorophylls, carotenoids and specific lipids. as cofactor. Post-translationally, tyr-161 forms a radical intermediate that is referred to as redox-active TyrZ, YZ or Y-Z. C-terminally processed by CTPA; processing is essential to allow assembly of the oxygen-evolving complex and thus photosynthetic growth.

The protein localises to the plastid. It is found in the chloroplast thylakoid membrane. It catalyses the reaction 2 a plastoquinone + 4 hnu + 2 H2O = 2 a plastoquinol + O2. Photosystem II (PSII) is a light-driven water:plastoquinone oxidoreductase that uses light energy to abstract electrons from H(2)O, generating O(2) and a proton gradient subsequently used for ATP formation. It consists of a core antenna complex that captures photons, and an electron transfer chain that converts photonic excitation into a charge separation. The D1/D2 (PsbA/PsbD) reaction center heterodimer binds P680, the primary electron donor of PSII as well as several subsequent electron acceptors. The sequence is that of Photosystem II protein D1 from Buxus microphylla (Littleleaf boxwood).